A 754-amino-acid chain; its full sequence is 5-methyltetrahydropteroyltriglutamate--homocysteine methyltransferase (754 aa).

5-methyltetrahydropteroyltri-L-glutamate is bound by residues 17–20 (RELK) and Lys-110. Residues 421–423 (IGS) and Glu-474 contribute to the L-homocysteine site. Residues 421 to 423 (IGS) and Glu-474 each bind L-methionine. 5-methyltetrahydropteroyltri-L-glutamate contacts are provided by residues 505 to 506 (RC) and Trp-551. Asp-589 is an L-homocysteine binding site. Asp-589 contacts L-methionine. Glu-595 is a 5-methyltetrahydropteroyltri-L-glutamate binding site. Zn(2+) contacts are provided by His-631, Cys-633, and Glu-655. Residue His-684 is the Proton donor of the active site. Cys-716 is a binding site for Zn(2+).

The protein belongs to the vitamin-B12 independent methionine synthase family. Zn(2+) is required as a cofactor.

It catalyses the reaction 5-methyltetrahydropteroyltri-L-glutamate + L-homocysteine = tetrahydropteroyltri-L-glutamate + L-methionine. The protein operates within amino-acid biosynthesis; L-methionine biosynthesis via de novo pathway; L-methionine from L-homocysteine (MetE route): step 1/1. Catalyzes the transfer of a methyl group from 5-methyltetrahydrofolate to homocysteine resulting in methionine formation. This Synechococcus sp. (strain JA-2-3B'a(2-13)) (Cyanobacteria bacterium Yellowstone B-Prime) protein is 5-methyltetrahydropteroyltriglutamate--homocysteine methyltransferase.